Here is a 205-residue protein sequence, read N- to C-terminus: GTP cyclohydrolase-2 (205 aa).

A GTP-binding site is contributed by 49 to 53 (RLHSE). Cys54, Cys65, and Cys67 together coordinate Zn(2+). GTP-binding positions include Gln70, 92–94 (EGR), and Thr114. The active-site Proton acceptor is the Asp126. Catalysis depends on Arg128, which acts as the Nucleophile. 2 residues coordinate GTP: Thr149 and Lys154.

It belongs to the GTP cyclohydrolase II family. The cofactor is Zn(2+).

The catalysed reaction is GTP + 4 H2O = 2,5-diamino-6-hydroxy-4-(5-phosphoribosylamino)-pyrimidine + formate + 2 phosphate + 3 H(+). Its pathway is cofactor biosynthesis; riboflavin biosynthesis; 5-amino-6-(D-ribitylamino)uracil from GTP: step 1/4. In terms of biological role, catalyzes the conversion of GTP to 2,5-diamino-6-ribosylamino-4(3H)-pyrimidinone 5'-phosphate (DARP), formate and pyrophosphate. This is GTP cyclohydrolase-2 from Pseudomonas putida (strain GB-1).